Reading from the N-terminus, the 68-residue chain is uncharacterized protein (68 aa).

A disordered region spans residues 1 to 68 (METIIRRFSP…GNSKNIKTKK (68 aa)). Residues 9-34 (SPKEKEKEKEKEEKDEKSKDKKEPIK) are compositionally biased toward basic and acidic residues. A compositionally biased stretch (acidic residues) spans 42-51 (DEEEEEDEQE).

This is an uncharacterized protein from Dictyostelium discoideum (Social amoeba).